The following is a 304-amino-acid chain: tRNA-uridine aminocarboxypropyltransferase 1 (304 aa).

Position 2 is an N-acetylserine (serine 2). The short motif at 206–209 is the DXTW element; sequence DSTW.

It belongs to the TDD superfamily. DTWD1 family.

Its subcellular location is the nucleus. The enzyme catalyses a uridine in tRNA + S-adenosyl-L-methionine = a 3-[(3S)-3-amino-3-carboxypropyl]uridine in tRNA + S-methyl-5'-thioadenosine + H(+). Functionally, catalyzes the formation of 3-(3-amino-3-carboxypropyl)uridine (acp3U) at position 20 in the D-loop of several cytoplasmic tRNAs (acp3U(20)). This Homo sapiens (Human) protein is tRNA-uridine aminocarboxypropyltransferase 1.